Here is a 454-residue protein sequence, read N- to C-terminus: tRNA modification GTPase MnmE (454 aa).

3 residues coordinate (6S)-5-formyl-5,6,7,8-tetrahydrofolate: Arg-23, Glu-80, and Lys-120. The TrmE-type G domain occupies 216 to 377 (GMKVVIAGRP…LRNHLKQSMG (162 aa)). A K(+)-binding site is contributed by Asn-226. Residues 226–231 (NAGKSS), 245–251 (TDIAGTT), 270–273 (DTAG), 335–338 (NKAD), and 358–360 (SAR) contribute to the GTP site. A Mg(2+)-binding site is contributed by Ser-230. Residues Thr-245, Ile-247, and Thr-250 each contribute to the K(+) site. Thr-251 contributes to the Mg(2+) binding site. Lys-454 serves as a coordination point for (6S)-5-formyl-5,6,7,8-tetrahydrofolate.

Belongs to the TRAFAC class TrmE-Era-EngA-EngB-Septin-like GTPase superfamily. TrmE GTPase family. Homodimer. Heterotetramer of two MnmE and two MnmG subunits. The cofactor is K(+).

Its subcellular location is the cytoplasm. Functionally, exhibits a very high intrinsic GTPase hydrolysis rate. Involved in the addition of a carboxymethylaminomethyl (cmnm) group at the wobble position (U34) of certain tRNAs, forming tRNA-cmnm(5)s(2)U34. The chain is tRNA modification GTPase MnmE from Klebsiella pneumoniae subsp. pneumoniae (strain ATCC 700721 / MGH 78578).